The chain runs to 266 residues: PDZ domain-containing protein 9 (266 aa).

The PDZ domain occupies 27–109; sequence KVIQTKLTVG…GTVLQIKAYR (83 aa).

The protein is PDZ domain-containing protein 9 (Pdzd9) of Mus musculus (Mouse).